Consider the following 259-residue polypeptide: Deoxyribose-phosphate aldolase (259 aa).

Catalysis depends on Asp-102, which acts as the Proton donor/acceptor. Lys-166 acts as the Schiff-base intermediate with acetaldehyde in catalysis. Lys-200 functions as the Proton donor/acceptor in the catalytic mechanism.

Belongs to the DeoC/FbaB aldolase family. DeoC type 2 subfamily.

The protein localises to the cytoplasm. It catalyses the reaction 2-deoxy-D-ribose 5-phosphate = D-glyceraldehyde 3-phosphate + acetaldehyde. It functions in the pathway carbohydrate degradation; 2-deoxy-D-ribose 1-phosphate degradation; D-glyceraldehyde 3-phosphate and acetaldehyde from 2-deoxy-alpha-D-ribose 1-phosphate: step 2/2. In terms of biological role, catalyzes a reversible aldol reaction between acetaldehyde and D-glyceraldehyde 3-phosphate to generate 2-deoxy-D-ribose 5-phosphate. In Vibrio cholerae serotype O1 (strain ATCC 39315 / El Tor Inaba N16961), this protein is Deoxyribose-phosphate aldolase.